Reading from the N-terminus, the 66-residue chain is Ranalexin (66 aa).

The signal sequence occupies residues 1–20 (MFTLKKSLLLLFFLGTINLS). Positions 21-44 (LCEEERNAEEERRDNPDERDVEVE) are cleaved as a propeptide — small acidic peptide. Residues Cys-60 and Cys-66 are joined by a disulfide bond.

The protein belongs to the frog skin active peptide (FSAP) family. Brevinin subfamily. As to expression, expressed by the skin dorsal glands.

The protein resides in the secreted. Functionally, potent microbicidal activity, active against S.aureus and E.coli. It also acts as a membrane-disruptive agent at higher concentrations. In Aquarana catesbeiana (American bullfrog), this protein is Ranalexin.